We begin with the raw amino-acid sequence, 118 residues long: uncharacterized protein (118 aa).

3 helical membrane-spanning segments follow: residues valine 20–isoleucine 39, leucine 46–valine 63, and leucine 67–glycine 85. The interval glycine 85–glutamate 118 is disordered. The segment covering serine 88 to serine 97 has biased composition (basic residues). Residues aspartate 103–glutamate 118 are compositionally biased toward acidic residues.

It localises to the cell membrane. This is an uncharacterized protein from Archaeoglobus fulgidus (strain ATCC 49558 / DSM 4304 / JCM 9628 / NBRC 100126 / VC-16).